Consider the following 156-residue polypeptide: Ribosomal RNA large subunit methyltransferase H (156 aa).

S-adenosyl-L-methionine contacts are provided by residues leucine 73, glycine 104, and 123–128 (ISSMTL).

The protein belongs to the RNA methyltransferase RlmH family. Homodimer.

The protein resides in the cytoplasm. It catalyses the reaction pseudouridine(1915) in 23S rRNA + S-adenosyl-L-methionine = N(3)-methylpseudouridine(1915) in 23S rRNA + S-adenosyl-L-homocysteine + H(+). Specifically methylates the pseudouridine at position 1915 (m3Psi1915) in 23S rRNA. This chain is Ribosomal RNA large subunit methyltransferase H, found in Burkholderia lata (strain ATCC 17760 / DSM 23089 / LMG 22485 / NCIMB 9086 / R18194 / 383).